The following is a 251-amino-acid chain: MVLFLLLVALLSPAGEAGKIIGGHEAKPHSRPYMAFLQFKISGKSYICGGFLVREDFVLTAAHCLGSSINVTLGAHTITDQERTQQVIQVRRAIPHPDYNDETCANDIMLLQLTRKAEMTDAVSLINLPRSLEKVKPGMMCSVAGWGQLGVNMPSADKLQEVDLEVQREEKCIARFKDYIPVTQICAGDPSKRKDSFLGDSGGPLVCDGVAQGIVSYGKDDGTTPNVYTRISSFLSWIQRTMRQYKNQGSA.

The first 17 residues, M1–A17, serve as a signal peptide directing secretion. The propeptide at G18–K19 is activation peptide. The Peptidase S1 domain maps to I20 to R243. An intrachain disulfide couples C48 to C64. The Charge relay system role is filled by H63. N70 carries N-linked (GlcNAc...) asparagine glycosylation. Residue D107 is the Charge relay system of the active site. Disulfide bonds link C141/C207 and C172/C186. The active-site Charge relay system is the S201.

Belongs to the peptidase S1 family. Granzyme subfamily.

It localises to the secreted. It is found in the cytoplasmic granule. The polypeptide is Mast cell protease 3 (Ovis aries (Sheep)).